The sequence spans 687 residues: Protein-glutamine gamma-glutamyltransferase 2 (687 aa).

N-acetylalanine is present on Ala2. Phosphoserine is present on Ser60. Intrachain disulfides connect Cys230/Cys370 and Cys370/Cys371. Residues Cys277, His335, and Asp358 contribute to the active site. Residues Asn398, Asp400, Glu437, Glu447, and Glu452 each contribute to the Ca(2+) site. Lys468 carries the N6-acetyllysine modification. 476–483 (RIRVGQSM) serves as a coordination point for GTP. Glu539 is a Ca(2+) binding site. GTP is bound at residue 580–583 (RDLY). Gln633 participates in a covalent cross-link: Isoglutamyl lysine isopeptide (Gln-Lys) (interchain with K-?).

It belongs to the transglutaminase superfamily. Transglutaminase family. As to quaternary structure, monomer. Interacts with phospholipase C; promoting alpha-1 adrenergic receptor signaling. Interacts with PLCD1. Homooligomer. Ca(2+) is required as a cofactor. Disulfide bond formation inactivates the calcium-dependent acyltransferase activity. Cys-370 can form disulfide bonds with both Cys-230 and Cys-371: formation of a disulfide bond between Cys-230 and Cys-370 facilitates formation of the disulfide between Cys-370 and Cys-371, which promotes inactivation of the acyltransferase activity. May also form interchain disulfids between Cys-230 and Cys-370. Ca(2+) protects against disulfide bond formation and inactivation. Post-translationally, auto-transglutaminated: Forms covalent cross-links mediated by transglutaminase between Gln-633 and the epsilon-amino group of a lysine residue of itself or HMGB1, forming homopolymers and heteropolymers, respectively. In terms of processing, S-nitrosylated, leading to inactivation of the acyltransferase activity.

It localises to the cytoplasm. It is found in the cytosol. The protein localises to the nucleus. The protein resides in the chromosome. Its subcellular location is the secreted. It localises to the extracellular space. It is found in the extracellular matrix. The protein localises to the cell membrane. The protein resides in the mitochondrion. Its subcellular location is the perinuclear region. The enzyme catalyses L-glutaminyl-[protein] + L-lysyl-[protein] = [protein]-L-lysyl-N(6)-5-L-glutamyl-[protein] + NH4(+). It catalyses the reaction L-glutaminyl-[protein] + serotonin = 5-serotonyl-L-glutamyl-[protein] + NH4(+). The catalysed reaction is L-glutaminyl-[protein] + dopamine = 5-dopaminyl-L-glutamyl-[protein] + NH4(+). It carries out the reaction L-glutaminyl-[protein] + histamine = 5-histaminyl-L-glutamyl-[protein] + NH4(+). The enzyme catalyses L-glutaminyl-[protein] + (R)-noradrenaline = 5-(R)-noradrenalinyl-L-glutamyl-[protein] + NH4(+). It catalyses the reaction L-glutaminyl-[protein] + H2O = L-glutamyl-[protein] + NH4(+). Its activity is regulated as follows. Acyltransferase activity is regulated by the binding of GTP and Ca(2+): inactivated by GTP, which stabilizes its closed structure, thereby obstructing the accessibility of substrates to the active sites. In contrast, Ca(2+) acts as a cofactor by inducing conformational change to the active open form. In absence of Ca(2+), Mg(2+) may bind Ca(2+)-binding sites, promoting GTP-binding and subsequent inhibition of the acyltransferase activity. Extracellularly reduced and activated by CLIC3. Specifically inhibited by compound VA4 ((S)-Benzyl (6-Acrylamido-1-(4-((5-(dimethylamino)naphthalen-1-yl)sulfonyl)piperazin-1-yl)-1-oxohexan-2-yl)carbamate), which specifically abolishes both the transamidation and GTP-binding activities. Functionally, calcium-dependent acyltransferase that catalyzes the formation of covalent bonds between peptide-bound glutamine and various primary amines, such as gamma-amino group of peptide-bound lysine, or mono- and polyamines, thereby producing cross-linked or aminated proteins, respectively. Involved in many biological processes, such as bone development, angiogenesis, wound healing, cellular differentiation, chromatin modification and apoptosis. Acts as a protein-glutamine gamma-glutamyltransferase by mediating the cross-linking of proteins, such as ACO2, HSPB6, FN1, HMGB1, RAP1GDS1, SLC25A4/ANT1, SPP1 and WDR54. Under physiological conditions, the protein cross-linking activity is inhibited by GTP; inhibition is relieved by Ca(2+) in response to various stresses. When secreted, catalyzes cross-linking of proteins of the extracellular matrix, such as FN1 and SPP1 resulting in the formation of scaffolds. Plays a key role during apoptosis, both by (1) promoting the cross-linking of cytoskeletal proteins resulting in condensation of the cytoplasm, and by (2) mediating cross-linking proteins of the extracellular matrix, resulting in the irreversible formation of scaffolds that stabilize the integrity of the dying cells before their clearance by phagocytosis, thereby preventing the leakage of harmful intracellular components. In addition to protein cross-linking, can use different monoamine substrates to catalyze a vast array of protein post-translational modifications: mediates aminylation of serotonin, dopamine, noradrenaline or histamine into glutamine residues of target proteins to generate protein serotonylation, dopaminylation, noradrenalinylation or histaminylation, respectively. Mediates protein serotonylation of small GTPases during activation and aggregation of platelets, leading to constitutive activation of these GTPases. Plays a key role in chromatin organization by mediating serotonylation and dopaminylation of histone H3. Catalyzes serotonylation of 'Gln-5' of histone H3 (H3Q5ser) during serotonergic neuron differentiation, thereby facilitating transcription. Acts as a mediator of neurotransmission-independent role of nuclear dopamine in ventral tegmental area (VTA) neurons: catalyzes dopaminylation of 'Gln-5' of histone H3 (H3Q5dop), thereby regulating relapse-related transcriptional plasticity in the reward system. Regulates vein remodeling by mediating serotonylation and subsequent inactivation of ATP2A2/SERCA2. Also acts as a protein deamidase by mediating the side chain deamidation of specific glutamine residues of proteins to glutamate. Catalyzes specific deamidation of protein gliadin, a component of wheat gluten in the diet. May also act as an isopeptidase cleaving the previously formed cross-links. Also able to participate in signaling pathways independently of its acyltransferase activity: acts as a signal transducer in alpha-1 adrenergic receptor-mediated stimulation of phospholipase C-delta (PLCD) activity and is required for coupling alpha-1 adrenergic agonists to the stimulation of phosphoinositide lipid metabolism. In terms of biological role, has cytotoxic activity: is able to induce apoptosis independently of its acyltransferase activity. This Homo sapiens (Human) protein is Protein-glutamine gamma-glutamyltransferase 2.